Consider the following 1467-residue polypeptide: Gag-Pol polyprotein (1467 aa).

Residue glycine 2 is the site of N-myristoyl glycine; by host attachment. The Nuclear export signal motif lies at 16 to 22 (FEHIRLR). The short motif at 26-32 (KKKYQIK) is the Nuclear localization signal element. A disordered region spans residues 116–144 (NAERNTTETSSGQKKNDKGVTVPPGGSQN). 2 CCHC-type zinc fingers span residues 402–419 (VKCY…QCPE) and 423–440 (MRCL…DCRG). The Peptidase A2 domain maps to 535 to 606 (IKALLDTGAD…TPINIIGRNL (72 aa)). Aspartate 540 serves as the catalytic For protease activity; shared with dimeric partner. Residues 662-852 (EGKISRVGGE…PPYEWMGYKL (191 aa)) enclose the Reverse transcriptase domain. Mg(2+) is bound by residues aspartate 728, aspartate 803, and aspartate 804. Residues 845–853 (YEWMGYKLW) are RT 'primer grip'. A Tryptophan repeat motif motif is present at residues 1015–1031 (WEQWWADYWQVSWIPEW). Residues 1050–1173 (PIPKEDVYYV…IDKLVSKGIR (124 aa)) enclose the RNase H type-1 domain. Mg(2+)-binding residues include aspartate 1114 and aspartate 1165. The Integrase-type zinc-finger motif lies at 1179–1220 (EKIEEAQEKHERYHNNWKNLADTYGLPQIVAKEIVAMCPKCQ). Residues histidine 1188, histidine 1192, cysteine 1216, and cysteine 1219 each coordinate Zn(2+). Residues 1230–1380 (VDASPGTWQM…TSAERLINII (151 aa)) form the Integrase catalytic domain. The Mg(2+) site is built by aspartate 1240 and aspartate 1292. A DNA-binding region (integrase-type) is located at residues 1399 to 1446 (FRVYYREGRDPVWKGPAQLIWKGEGAVVLKDGSDLKVVPRRKAKIIKD). The tract at residues 1447 to 1467 (YEPKQRVGNEGDVEGTRGSDN) is disordered.

As to quaternary structure, homotrimer. Interacts with gp41 (via C-terminus). In terms of assembly, homodimer. The active site consists of two apposed aspartic acid residues. Heterodimer of p66 RT and p51 RT (RT p66/p51). Heterodimerization of RT is essential for DNA polymerase activity. Despite the sequence identities, p66 RT and p51 RT have distinct folding. As to quaternary structure, homotetramer; may further associate as a homohexadecamer. The cofactor is Mg(2+). In terms of processing, specific enzymatic cleavages by the viral protease yield mature proteins. The protease is released by autocatalytic cleavage. The polyprotein is cleaved during and after budding, this process is termed maturation. Proteolytic cleavage of p66 RT removes the RNase H domain to yield the p51 RT subunit. Post-translationally, capsid protein p24 is phosphorylated.

It is found in the virion. It localises to the host nucleus. The protein resides in the host cytoplasm. The protein localises to the host cell membrane. The enzyme catalyses Specific for a P1 residue that is hydrophobic, and P1' variable, but often Pro.. The catalysed reaction is Endohydrolysis of RNA in RNA/DNA hybrids. Three different cleavage modes: 1. sequence-specific internal cleavage of RNA. Human immunodeficiency virus type 1 and Moloney murine leukemia virus enzymes prefer to cleave the RNA strand one nucleotide away from the RNA-DNA junction. 2. RNA 5'-end directed cleavage 13-19 nucleotides from the RNA end. 3. DNA 3'-end directed cleavage 15-20 nucleotides away from the primer terminus.. It catalyses the reaction 3'-end directed exonucleolytic cleavage of viral RNA-DNA hybrid.. It carries out the reaction DNA(n) + a 2'-deoxyribonucleoside 5'-triphosphate = DNA(n+1) + diphosphate. Its activity is regulated as follows. The viral protease is inhibited by many synthetic protease inhibitors (PIs), such as amprenavir, atazanavir, indinavir, loprinavir, nelfinavir, ritonavir and saquinavir. RT can be inhibited either by nucleoside RT inhibitors (NRTIs) or by non nucleoside RT inhibitors (NNRTIs). NRTIs act as chain terminators, whereas NNRTIs inhibit DNA polymerization by binding a small hydrophobic pocket near the RT active site and inducing an allosteric change in this region. Classical NRTIs are abacavir, adefovir (PMEA), didanosine (ddI), lamivudine (3TC), stavudine (d4T), tenofovir (PMPA), zalcitabine (ddC), and zidovudine (AZT). Classical NNRTIs are atevirdine (BHAP U-87201E), delavirdine, efavirenz (DMP-266), emivirine (I-EBU), and nevirapine (BI-RG-587). The tritherapies used as a basic effective treatment of AIDS associate two NRTIs and one NNRTI. Use of protease inhibitors in tritherapy regimens permit more ambitious therapeutic strategies. Gag-Pol polyprotein and Gag polyprotein may regulate their own translation, by the binding genomic RNA in the 5'-UTR. At low concentration, Gag-Pol and Gag would promote translation, whereas at high concentration, the polyproteins encapsidate genomic RNA and then shut off translation. Functionally, matrix protein p17 has two main functions: in infected cell, it targets Gag and Gag-pol polyproteins to the plasma membrane via a multipartite membrane-binding signal, that includes its myristointegration complex. The myristoylation signal and the NLS exert conflicting influences its subcellular localization. The key regulation of these motifs might be phosphorylation of a portion of MA molecules on the C-terminal tyrosine at the time of virus maturation, by virion-associated cellular tyrosine kinase. Implicated in the release from host cell mediated by Vpu. Its function is as follows. Capsid protein p24 forms the conical core that encapsulates the genomic RNA-nucleocapsid complex in the virion. The core is constituted by capsid protein hexamer subunits. The core is disassembled soon after virion entry. Interaction with host PPIA/CYPA protects the virus from restriction by host TRIM5-alpha and from an unknown antiviral activity in host cells. This capsid restriction by TRIM5 is one of the factors which restricts SIV to the simian species. In terms of biological role, nucleocapsid protein p7 encapsulates and protects viral dimeric unspliced (genomic) RNA. Binds these RNAs through its zinc fingers. Facilitates rearangement of nucleic acid secondary structure during retrotranscription of genomic RNA. This capability is referred to as nucleic acid chaperone activity. The aspartyl protease mediates proteolytic cleavages of Gag and Gag-Pol polyproteins during or shortly after the release of the virion from the plasma membrane. Cleavages take place as an ordered, step-wise cascade to yield mature proteins. This process is called maturation. Displays maximal activity during the budding process just prior to particle release from the cell. Also cleaves Nef and Vif, probably concomitantly with viral structural proteins on maturation of virus particles. Hydrolyzes host EIF4GI and PABP1 in order to shut off the capped cellular mRNA translation. The resulting inhibition of cellular protein synthesis serves to ensure maximal viral gene expression and to evade host immune response. Functionally, reverse transcriptase/ribonuclease H (RT) is a multifunctional enzyme that converts the viral dimeric RNA genome into dsDNA in the cytoplasm, shortly after virus entry into the cell. This enzyme displays a DNA polymerase activity that can copy either DNA or RNA templates, and a ribonuclease H (RNase H) activity that cleaves the RNA strand of RNA-DNA heteroduplexes in a partially processive 3' to 5' endonucleasic mode. Conversion of viral genomic RNA into dsDNA requires many steps. A tRNA binds to the primer-binding site (PBS) situated at the 5'-end of the viral RNA. RT uses the 3' end of the tRNA primer to perform a short round of RNA-dependent minus-strand DNA synthesis. The reading proceeds through the U5 region and ends after the repeated (R) region which is present at both ends of viral RNA. The portion of the RNA-DNA heteroduplex is digested by the RNase H, resulting in a ssDNA product attached to the tRNA primer. This ssDNA/tRNA hybridizes with the identical R region situated at the 3' end of viral RNA. This template exchange, known as minus-strand DNA strong stop transfer, can be either intra- or intermolecular. RT uses the 3' end of this newly synthesized short ssDNA to perform the RNA-dependent minus-strand DNA synthesis of the whole template. RNase H digests the RNA template except for two polypurine tracts (PPTs) situated at the 5'-end and near the center of the genome. It is not clear if both polymerase and RNase H activities are simultaneous. RNase H can probably proceed both in a polymerase-dependent (RNA cut into small fragments by the same RT performing DNA synthesis) and a polymerase-independent mode (cleavage of remaining RNA fragments by free RTs). Secondly, RT performs DNA-directed plus-strand DNA synthesis using the PPTs that have not been removed by RNase H as primers. PPTs and tRNA primers are then removed by RNase H. The 3' and 5' ssDNA PBS regions hybridize to form a circular dsDNA intermediate. Strand displacement synthesis by RT to the PBS and PPT ends produces a blunt ended, linear dsDNA copy of the viral genome that includes long terminal repeats (LTRs) at both ends. Its function is as follows. Integrase catalyzes viral DNA integration into the host chromosome, by performing a series of DNA cutting and joining reactions. This enzyme activity takes place after virion entry into a cell and reverse transcription of the RNA genome in dsDNA. The first step in the integration process is 3' processing. This step requires a complex comprising the viral genome, matrix protein, Vpr and integrase. This complex is called the pre-integration complex (PIC). The integrase protein removes 2 nucleotides from each 3' end of the viral DNA, leaving recessed CA OH's at the 3' ends. In the second step, the PIC enters cell nucleus. This process is mediated through integrase and Vpr proteins, and allows the virus to infect a non dividing cell. This ability to enter the nucleus is specific of lentiviruses, other retroviruses cannot and rely on cell division to access cell chromosomes. In the third step, termed strand transfer, the integrase protein joins the previously processed 3' ends to the 5' ends of strands of target cellular DNA at the site of integration. The 5'-ends are produced by integrase-catalyzed staggered cuts, 5 bp apart. A Y-shaped, gapped, recombination intermediate results, with the 5'-ends of the viral DNA strands and the 3' ends of target DNA strands remaining unjoined, flanking a gap of 5 bp. The last step is viral DNA integration into host chromosome. This involves host DNA repair synthesis in which the 5 bp gaps between the unjoined strands are filled in and then ligated. Since this process occurs at both cuts flanking the SIV genome, a 5 bp duplication of host DNA is produced at the ends of SIV integration. Alternatively, Integrase may catalyze the excision of viral DNA just after strand transfer, this is termed disintegration. The polypeptide is Gag-Pol polyprotein (gag-pol) (Cercopithecidae (Old World monkeys)).